Here is a 64-residue protein sequence, read N- to C-terminus: uncharacterized protein (64 aa).

The interval 35 to 64 is disordered; that stretch reads TIRKPPIEHAAGPLGSTSRAGHRSYGGVAS.

This is an uncharacterized protein from Mycobacterium tuberculosis (strain ATCC 25618 / H37Rv).